We begin with the raw amino-acid sequence, 637 residues long: Pentatricopeptide repeat-containing protein At1g12300, mitochondrial (637 aa).

The transit peptide at 1 to 95 (MVKLMIRRLS…PTVIDFSRLF (95 aa)) directs the protein to the mitochondrion. PPR repeat units lie at residues 87-121 (TVIDFSRLFSAIAKTKQYDLVLALCKQMELKGIAH), 122-156 (NLYTLSIMINCFCRCRKLCLAFSAMGKIIKLGYEP), 157-191 (NTITFSTLINGLCLEGRVSEALELVDRMVEMGHKP), 192-226 (DLITINTLVNGLCLSGKEAEAMLLIDKMVEYGCQP), 227-261 (NAVTYGPVLNVMCKSGQTALAMELLRKMEERNIKL), 262-296 (DAVKYSIIIDGLCKHGSLDNAFNLFNEMEMKGITT), 297-331 (NIITYNILIGGFCNAGRWDDGAKLLRDMIKRKINP), 332-366 (NVVTFSVLIDSFVKEGKLREAEELHKEMIHRGIAP), 367-401 (DTITYTSLIDGFCKENHLDKANQMVDLMVSKGCDP), 402-436 (NIRTFNILINGYCKANRIDDGLELFRKMSLRGVVA), 437-471 (DTVTYNTLIQGFCELGKLNVAKELFQEMVSRKVPP), 472-506 (NIVTYKILLDGLCDNGESEKALEIFEKIEKSKMEL), 507-541 (DIGIYNIIIHGMCNASKVDDAWDLFCSLPLKGVKP), 542-576 (GVKTYNIMIGGLCKKGPLSEAELLFRKMEEDGHAP), and 577-611 (DGWTYNILIRAHLGDGDATKSVKLIEELKRCGFSV).

This sequence belongs to the PPR family. P subfamily.

It localises to the mitochondrion. This Arabidopsis thaliana (Mouse-ear cress) protein is Pentatricopeptide repeat-containing protein At1g12300, mitochondrial.